Here is a 170-residue protein sequence, read N- to C-terminus: 3-hydroxydecanoyl-[acyl-carrier-protein] dehydratase (170 aa).

His-69 is an active-site residue.

The protein belongs to the thioester dehydratase family. FabA subfamily. In terms of assembly, homodimer.

The protein resides in the cytoplasm. It carries out the reaction a (3R)-hydroxyacyl-[ACP] = a (2E)-enoyl-[ACP] + H2O. The catalysed reaction is (3R)-hydroxydecanoyl-[ACP] = (2E)-decenoyl-[ACP] + H2O. It catalyses the reaction (2E)-decenoyl-[ACP] = (3Z)-decenoyl-[ACP]. It participates in lipid metabolism; fatty acid biosynthesis. Functionally, necessary for the introduction of cis unsaturation into fatty acids. Catalyzes the dehydration of (3R)-3-hydroxydecanoyl-ACP to E-(2)-decenoyl-ACP and then its isomerization to Z-(3)-decenoyl-ACP. Can catalyze the dehydratase reaction for beta-hydroxyacyl-ACPs with saturated chain lengths up to 16:0, being most active on intermediate chain length. The polypeptide is 3-hydroxydecanoyl-[acyl-carrier-protein] dehydratase (Idiomarina loihiensis (strain ATCC BAA-735 / DSM 15497 / L2-TR)).